We begin with the raw amino-acid sequence, 395 residues long: 1-deoxy-D-xylulose 5-phosphate reductoisomerase (395 aa).

The NADPH site is built by Thr-10, Gly-11, Ser-12, Ile-13, Arg-37, Gln-38, and Asn-124. Residue Lys-125 coordinates 1-deoxy-D-xylulose 5-phosphate. Glu-126 is a binding site for NADPH. Residue Asp-150 coordinates Mn(2+). The 1-deoxy-D-xylulose 5-phosphate site is built by Ser-151, Glu-152, Ser-179, and His-202. Glu-152 contacts Mn(2+). Gly-208 contacts NADPH. 1-deoxy-D-xylulose 5-phosphate is bound by residues Ser-215, Asn-220, Lys-221, and Glu-224. Glu-224 is a Mn(2+) binding site.

Belongs to the DXR family. It depends on Mg(2+) as a cofactor. Mn(2+) is required as a cofactor.

It catalyses the reaction 2-C-methyl-D-erythritol 4-phosphate + NADP(+) = 1-deoxy-D-xylulose 5-phosphate + NADPH + H(+). It functions in the pathway isoprenoid biosynthesis; isopentenyl diphosphate biosynthesis via DXP pathway; isopentenyl diphosphate from 1-deoxy-D-xylulose 5-phosphate: step 1/6. Catalyzes the NADPH-dependent rearrangement and reduction of 1-deoxy-D-xylulose-5-phosphate (DXP) to 2-C-methyl-D-erythritol 4-phosphate (MEP). In Cupriavidus pinatubonensis (strain JMP 134 / LMG 1197) (Cupriavidus necator (strain JMP 134)), this protein is 1-deoxy-D-xylulose 5-phosphate reductoisomerase.